The following is a 145-amino-acid chain: 3-hydroxyacyl-[acyl-carrier-protein] dehydratase FabZ (145 aa).

The active site involves histidine 49.

Belongs to the thioester dehydratase family. FabZ subfamily.

It localises to the cytoplasm. The catalysed reaction is a (3R)-hydroxyacyl-[ACP] = a (2E)-enoyl-[ACP] + H2O. Its function is as follows. Involved in unsaturated fatty acids biosynthesis. Catalyzes the dehydration of short chain beta-hydroxyacyl-ACPs and long chain saturated and unsaturated beta-hydroxyacyl-ACPs. The polypeptide is 3-hydroxyacyl-[acyl-carrier-protein] dehydratase FabZ (Rickettsia massiliae (strain Mtu5)).